Here is a 227-residue protein sequence, read N- to C-terminus: PKHD-type hydroxylase PHZ_c0292 (227 aa).

Residues 78 to 178 form the Fe2OG dioxygenase domain; sequence VVFPPLFNRY…RVCSFFWIQS (101 aa). Residues His-96, Asp-98, and His-159 each coordinate Fe cation. Arg-169 serves as a coordination point for 2-oxoglutarate.

Fe(2+) serves as cofactor. L-ascorbate is required as a cofactor.

In Phenylobacterium zucineum (strain HLK1), this protein is PKHD-type hydroxylase PHZ_c0292.